The sequence spans 471 residues: Coagulation factor IX (471 aa).

Positions 1–28 (MKHLNTVMAESPALITIFLLGYLLSTEC) are cleaved as a signal peptide. The propeptide occupies 29–46 (AVFLDRENATKILTRPKR). Positions 47, 48, 53, 54, 61, 63, 66, 67, 72, 73, and 76 each coordinate Ca(2+). A Gla domain is found at 47–92 (YNSGKLEEFVRGNLERECIEERCSFEEAREVFENTEKTTEFWKQYV). 4-carboxyglutamate is present on residues glutamate 53, glutamate 54, glutamate 61, glutamate 63, glutamate 66, glutamate 67, glutamate 72, glutamate 73, glutamate 76, glutamate 79, and glutamate 82. Glutamate 61 serves as a coordination point for Mg(2+). Residues cysteine 64 and cysteine 69 are joined by a disulfide bond. A Mg(2+)-binding site is contributed by glutamate 66. Glutamate 72 provides a ligand contact to Mg(2+). Position 76 (glutamate 76) interacts with Mg(2+). Glutamate 82 contacts Ca(2+). Position 82 (glutamate 82) interacts with Mg(2+). Residue threonine 85 is glycosylated (O-linked (GalNAc...) threonine). Positions 86, 93, 94, and 96 each coordinate Ca(2+). Glutamate 86 bears the 4-carboxyglutamate mark. Residue glutamate 86 coordinates Mg(2+). An EGF-like 1; calcium-binding domain is found at 93–129 (DGDQCESNPCLNGGICKDDISSYECWCQVGFEGRNCE). Intrachain disulfides connect cysteine 97-cysteine 108, cysteine 102-cysteine 117, cysteine 119-cysteine 128, cysteine 134-cysteine 145, cysteine 141-cysteine 155, cysteine 157-cysteine 170, cysteine 178-cysteine 345, cysteine 262-cysteine 278, cysteine 392-cysteine 406, and cysteine 417-cysteine 445. An O-linked (Glc...) serine glycan is attached at serine 99. Ca(2+) is bound by residues aspartate 110 and aspartate 111. Aspartate 110 is modified ((3R)-3-hydroxyaspartate). Serine 114 bears the Phosphoserine mark. The 42-residue stretch at 130-171 (LDATCNIKNGRCKQFCKNSPDNKVICSCTEGYQLAEDQKSCE) folds into the EGF-like 2 domain. A propeptide spans 193–236 (AETVFSNMDYENSTEAVFIQDDITDGAILNNVTESSESLNDFTR) (activation peptide). Residue tyrosine 202 is modified to Sulfotyrosine. N-linked (GlcNAc...) asparagine glycosylation occurs at asparagine 204. Serine 205 bears the Phosphoserine mark. Phosphothreonine; alternate is present on threonine 206. O-linked (GalNAc...) threonine; alternate glycosylation occurs at threonine 206. Asparagine 223 carries N-linked (GlcNAc...) asparagine glycosylation. O-linked (GalNAc...) threonine glycans are attached at residues threonine 225 and threonine 235. The region spanning 237 to 469 (VVGGENAKPG…YVNWIKEKTK (233 aa)) is the Peptidase S1 domain. Residue histidine 277 is the Charge relay system of the active site. Positions 291, 293, 298, and 301 each coordinate Ca(2+). The active-site Charge relay system is the aspartate 325. The active-site Charge relay system is serine 421.

This sequence belongs to the peptidase S1 family. As to quaternary structure, heterodimer of a light chain and a heavy chain; disulfide-linked. Interacts (inactive and activated) with F11 (activated) in calcium-dependent manner. Interacts with SERPINC1. In terms of processing, activated by factor XIa, which excises the activation peptide. The propeptide can also be removed by snake venom protease. Activated by coagulation factor VIIa-tissue factor (F7-F3) complex in calcium-dependent manner. Post-translationally, the iron and 2-oxoglutarate dependent 3-hydroxylation of aspartate and asparagine is (R) stereospecific within EGF domains. Predominantly O-glucosylated at Ser-99 by POGLUT1 in vitro. In terms of tissue distribution, detected in liver.

Its subcellular location is the secreted. The catalysed reaction is Selective cleavage of Arg-|-Ile bond in factor X to form factor Xa.. Its function is as follows. Factor IX is a vitamin K-dependent plasma protein that participates in the intrinsic pathway of blood coagulation by converting factor X to its active form in the presence of Ca(2+) ions, phospholipids, and factor VIIIa. This is Coagulation factor IX (F9) from Mus musculus (Mouse).